Consider the following 318-residue polypeptide: Dehydrogenase/reductase SDR family member 7C-B (318 aa).

The N-terminal stretch at 1–32 (MGMSDIMWLDVSWAWLVLTAVLLAAAVFYLYT) is a signal peptide. 49–73 (LITDSLSTVGNECAKLFHAGGARLI) lines the NAD(+) pocket. S186 serves as a coordination point for substrate. Residue Y199 is the Proton acceptor of the active site.

The protein belongs to the short-chain dehydrogenases/reductases (SDR) family.

It is found in the secreted. In terms of biological role, putative oxidoreductase. In Danio rerio (Zebrafish), this protein is Dehydrogenase/reductase SDR family member 7C-B (dhrs7cb).